A 124-amino-acid polypeptide reads, in one-letter code: UPF0102 protein Meso_4010 (124 aa).

Belongs to the UPF0102 family.

This Chelativorans sp. (strain BNC1) protein is UPF0102 protein Meso_4010.